The chain runs to 124 residues: Ribonuclease pancreatic (124 aa).

Over residues 1–13 (KETSAQKFERQHM) the composition is skewed to basic and acidic residues. The interval 1–25 (KETSAQKFERQHMDSTGSSSSSPTY) is disordered. Substrate contacts are provided by lysine 7 and arginine 10. The active-site Proton acceptor is histidine 12. Disulfide bonds link cysteine 26/cysteine 84, cysteine 40/cysteine 95, cysteine 58/cysteine 110, and cysteine 65/cysteine 72. Substrate contacts are provided by residues 41 to 45 (KPVNT), lysine 66, and arginine 85. Histidine 119 serves as the catalytic Proton donor.

This sequence belongs to the pancreatic ribonuclease family. As to quaternary structure, monomer. Interacts with and forms tight 1:1 complexes with RNH1. Dimerization of two such complexes may occur. Interaction with RNH1 inhibits this protein. As to expression, pancreas.

It is found in the secreted. It carries out the reaction an [RNA] containing cytidine + H2O = an [RNA]-3'-cytidine-3'-phosphate + a 5'-hydroxy-ribonucleotide-3'-[RNA].. The catalysed reaction is an [RNA] containing uridine + H2O = an [RNA]-3'-uridine-3'-phosphate + a 5'-hydroxy-ribonucleotide-3'-[RNA].. Endonuclease that catalyzes the cleavage of RNA on the 3' side of pyrimidine nucleotides. Acts on single-stranded and double-stranded RNA. The sequence is that of Ribonuclease pancreatic (RNASE1) from Ondatra zibethicus (Muskrat).